Reading from the N-terminus, the 478-residue chain is Aspartate ammonia-lyase (478 aa).

Thr-109, Ser-148, Thr-149, Asn-150, and Thr-195 together coordinate L-aspartate. An SS loop region spans residues 326–335 (GSSIMPGKVN). The Proton acceptor role is filled by Ser-327. 2 residues coordinate L-aspartate: Ser-328 and Lys-333.

This sequence belongs to the class-II fumarase/aspartase family. Aspartase subfamily. Homotetramer.

The enzyme catalyses L-aspartate = fumarate + NH4(+). Catalyzes the reversible conversion of L-aspartate to fumarate and ammonia. This is Aspartate ammonia-lyase from Pseudomonas fluorescens.